A 525-amino-acid chain; its full sequence is GMP synthase [glutamine-hydrolyzing] (525 aa).

Residues 8-207 (KILILDFGSQ…ALDICECEAN (200 aa)) enclose the Glutamine amidotransferase type-1 domain. The active-site Nucleophile is cysteine 85. Catalysis depends on residues histidine 181 and glutamate 183. In terms of domain architecture, GMPS ATP-PPase spans 208–400 (WKPTSIIEDA…LGLPYDMLYR (193 aa)). Residue 235-241 (SGGVDSS) coordinates ATP.

Homodimer.

The catalysed reaction is XMP + L-glutamine + ATP + H2O = GMP + L-glutamate + AMP + diphosphate + 2 H(+). The protein operates within purine metabolism; GMP biosynthesis; GMP from XMP (L-Gln route): step 1/1. Functionally, catalyzes the synthesis of GMP from XMP. The protein is GMP synthase [glutamine-hydrolyzing] of Shewanella sediminis (strain HAW-EB3).